The following is a 639-amino-acid chain: Immunoglobulin-like domain-containing receptor 2 (639 aa).

Residues 1-20 (MDRVLLRWISLFWLTAMVEG) form the signal peptide. The Ig-like V-type domain occupies 21–162 (LQVTVPDKKK…LEGKNEDSVE (142 aa)). Residues 21–186 (LQVTVPDKKK…PSFAVEIMPE (166 aa)) are Lumenal-facing. Cys-42 and Cys-145 are joined by a disulfide. A helical transmembrane segment spans residues 187 to 207 (WVFVGLVLLGVFLFFVLVGIC). The Cytoplasmic portion of the chain corresponds to 208-639 (WCQCCPHSCC…DFPTRMSLVV (432 aa)). Disordered regions lie at residues 273 to 295 (LMDK…HSVR), 374 to 415 (WSGV…MLSR), and 437 to 639 (YGQR…SLVV). 2 stretches are compositionally biased toward basic and acidic residues: residues 393–414 (YNKE…EMLS) and 442–464 (RRAD…ESRA). Phosphoserine is present on Ser-473. Over residues 483–493 (RSREPLTDADR) the composition is skewed to basic and acidic residues. Arg-544 carries the post-translational modification Omega-N-methylarginine. Ser-579 is modified (phosphoserine). Positions 606-617 (RGRDLPYHSNSE) are enriched in basic and acidic residues.

It belongs to the immunoglobulin superfamily. LISCH7 family. As to quaternary structure, interacts with MARVELD2 and OCLN. Interacts with P4HB AND HSPA5; the interaction with HSPA5 stabilizes ILDR2 expression. Interacts (via C-terminus) with TRA2A, TRA2B and SRSF1. In terms of tissue distribution, expressed in testis, brain, pituitary, colon, heart, nerves, prostate, esophagus, lung liver and small intestine. Highly expressed in macrophages, also expressed in monocytes and at low levels in NK and NKT cells (at protein level).

It is found in the endoplasmic reticulum membrane. The protein localises to the cell junction. Its subcellular location is the tight junction. It localises to the nucleus. Its function is as follows. May be involved in ER stress pathways with effects on lipid homeostasis and insulin secretion. With ILDR1 and LSR, involved in the maintain of the epithelial barrier function through the recruitment of MARVELD2/tricellulin to tricellular tight junctions. Also functions as a B7-like protein family member expressed on immune cells and inflamed tissue and with T-cell inhibitory activity. In the inner ear, may regulate alternative pre-mRNA splicing via binding to TRA2A, TRA2B and SRSF1. The protein is Immunoglobulin-like domain-containing receptor 2 of Homo sapiens (Human).